Consider the following 815-residue polypeptide: Probable oligoxyloglucan-reducing end-specific xyloglucanase (815 aa).

The signal sequence occupies residues 1–19; the sequence is MKFWLQQLGLAVLCASSAA. Catalysis depends on D58, which acts as the Nucleophile. Residue N113 is glycosylated (N-linked (GlcNAc...) asparagine). The stretch at 118–128 is one BNR 1 repeat; the sequence is FVSNDRGATFT. N180 carries an N-linked (GlcNAc...) asparagine glycan. The stretch at 218–228 is one BNR 2 repeat; that stretch reads YYTTDGGKNWE. 3 N-linked (GlcNAc...) asparagine glycosylation sites follow: N246, N290, and N304. Residues 351 to 361 form a BNR 3 repeat; the sequence is YLSRDGGKTWK. N387 is a glycosylation site (N-linked (GlcNAc...) asparagine). The active-site Proton donor is D489. One copy of the BNR 4 repeat lies at 545–555; that stretch reads YSTDGGSEWTK. N-linked (GlcNAc...) asparagine glycosylation is found at N564 and N603. The BNR 5 repeat unit spans residues 649-658; it reads YVSTDGGLSY. N-linked (GlcNAc...) asparagine glycosylation occurs at N662. BNR repeat units lie at residues 696–706 and 749–759; these read YHTTDFGKRWK and YRSDDNGSTWD. N754 carries an N-linked (GlcNAc...) asparagine glycan.

Belongs to the glycosyl hydrolase 74 family.

It is found in the secreted. It carries out the reaction Hydrolysis of cellobiose from the reducing end of xyloglucans consisting of a beta-(1-&gt;4)-linked glucan carrying alpha-D-xylosyl groups on O-6 of the glucose residues. To be a substrate, the first residue must be unsubstituted, the second residue may bear a xylosyl group, whether further glycosylated or not, and the third residue, which becomes the new terminus by the action of the enzyme, is preferably xylosylated, but this xylose residue must not be further substituted.. Functionally, oligoxyloglucan-reducing end-specific xyloglucanase involved in degradation of xyloglucans. Releases the first two glycosyl segments from oligoxyloglucans. Active against cotton xyloglucan, tamarind xyloglucan and tamarind xyloglucan oligomers. This Neosartorya fischeri (strain ATCC 1020 / DSM 3700 / CBS 544.65 / FGSC A1164 / JCM 1740 / NRRL 181 / WB 181) (Aspergillus fischerianus) protein is Probable oligoxyloglucan-reducing end-specific xyloglucanase (xgcA).